The primary structure comprises 448 residues: Glucose-6-phosphate isomerase (448 aa).

E290 acts as the Proton donor in catalysis. Active-site residues include H311 and K425.

This sequence belongs to the GPI family.

It localises to the cytoplasm. It catalyses the reaction alpha-D-glucose 6-phosphate = beta-D-fructose 6-phosphate. The protein operates within carbohydrate biosynthesis; gluconeogenesis. Its pathway is carbohydrate degradation; glycolysis; D-glyceraldehyde 3-phosphate and glycerone phosphate from D-glucose: step 2/4. In terms of biological role, catalyzes the reversible isomerization of glucose-6-phosphate to fructose-6-phosphate. The protein is Glucose-6-phosphate isomerase of Lactococcus lactis subsp. cremoris (strain SK11).